Consider the following 115-residue polypeptide: Splicing factor 3B subunit 6-like protein (115 aa).

The tract at residues 9-22 (EVNSILFIKNLSFK) is interaction with pre-mRNA branch site. The RRM domain maps to 12 to 87 (SILFIKNLSF…RYLVVHYYNP (76 aa)).

The protein resides in the nucleus. Functionally, necessary for the splicing of pre-mRNA. The polypeptide is Splicing factor 3B subunit 6-like protein (Schizosaccharomyces pombe (strain 972 / ATCC 24843) (Fission yeast)).